The primary structure comprises 329 residues: UPF0421 protein SH1063 (329 aa).

Transmembrane regions (helical) follow at residues 25-45 (LFCLMLDLTPIFAILTAIVTI), 60-80 (LPATVIGALFAVLFTFIFGDP), 87-107 (FSALFTILVCTKLNLQVGTTV), 108-128 (AVLTSVAMIPGIHDAYLFNFF), and 131-151 (LLTALIGLVTAGLVNFIVLPP).

It belongs to the UPF0421 family.

The protein resides in the cell membrane. This is UPF0421 protein SH1063 from Staphylococcus haemolyticus (strain JCSC1435).